The sequence spans 284 residues: MLLATFKLCAGSSYRHLRNMKGLRHQAVLAIGQELNRRTLGDSSPGWISQVRRRSSLLGSQLEAALYSEQELSYIQQGEVAMQKALSILSNQEGWKKENQQENGDEVLSKVVPDVGKVFRLEVVVDQPMDRLYAELVDRMEAMGEWNPNVKEIKVLQKIGKDTVITHELAAAAAGNLVGPRDFVSVRCAKRRGSTCVLAGIATHFGEMPEQSGVIRAEQGPTCMVLHPLAGSPSKTKFTWLLSIDLKGWLPKSIINQVLSQTQMEFANHLRKRLESSSASEARC.

The N-terminal 62 residues, 1 to 62 (MLLATFKLCA…RRSSLLGSQL (62 aa)), are a transit peptide targeting the mitochondrion. A phosphoserine; by PKA mark is found at Ser-56 and Ser-194. The 214-residue stretch at 66–279 (LYSEQELSYI…LRKRLESSSA (214 aa)) folds into the START domain.

As to quaternary structure, may interact with TSPO.

The protein resides in the mitochondrion. The protein operates within steroid metabolism; cholesterol metabolism. Functionally, plays a key role in steroid hormone synthesis by enhancing the metabolism of cholesterol into pregnenolone. Mediates the transfer of cholesterol from the outer mitochondrial membrane to the inner mitochondrial membrane where it is cleaved to pregnenolone. The chain is Steroidogenic acute regulatory protein, mitochondrial (STAR) from Mesocricetus auratus (Golden hamster).